Consider the following 210-residue polypeptide: Shikimate kinase (210 aa).

34 to 39 is a binding site for ATP; sequence GAGKSV. Residue Ser38 coordinates Mg(2+). Substrate contacts are provided by Asp56, Arg80, and Gly102. Residue Arg140 coordinates ATP. Substrate is bound at residue Arg159.

This sequence belongs to the shikimate kinase family. In terms of assembly, monomer. Mg(2+) serves as cofactor.

It is found in the cytoplasm. It carries out the reaction shikimate + ATP = 3-phosphoshikimate + ADP + H(+). The protein operates within metabolic intermediate biosynthesis; chorismate biosynthesis; chorismate from D-erythrose 4-phosphate and phosphoenolpyruvate: step 5/7. Its function is as follows. Catalyzes the specific phosphorylation of the 3-hydroxyl group of shikimic acid using ATP as a cosubstrate. The sequence is that of Shikimate kinase from Bartonella quintana (strain Toulouse) (Rochalimaea quintana).